The following is a 270-amino-acid chain: Putative pyruvate, phosphate dikinase regulatory protein (270 aa).

148-155 (GISRTSKT) is a binding site for ADP.

Belongs to the pyruvate, phosphate/water dikinase regulatory protein family. PDRP subfamily.

The enzyme catalyses N(tele)-phospho-L-histidyl/L-threonyl-[pyruvate, phosphate dikinase] + ADP = N(tele)-phospho-L-histidyl/O-phospho-L-threonyl-[pyruvate, phosphate dikinase] + AMP + H(+). It carries out the reaction N(tele)-phospho-L-histidyl/O-phospho-L-threonyl-[pyruvate, phosphate dikinase] + phosphate + H(+) = N(tele)-phospho-L-histidyl/L-threonyl-[pyruvate, phosphate dikinase] + diphosphate. Its function is as follows. Bifunctional serine/threonine kinase and phosphorylase involved in the regulation of the pyruvate, phosphate dikinase (PPDK) by catalyzing its phosphorylation/dephosphorylation. In Bacillus mycoides (strain KBAB4) (Bacillus weihenstephanensis), this protein is Putative pyruvate, phosphate dikinase regulatory protein.